Reading from the N-terminus, the 286-residue chain is 4-hydroxybenzoate octaprenyltransferase (286 aa).

A run of 9 helical transmembrane segments spans residues 22–42 (IGTLLLLWPTLWALWLASAGV), 45–65 (FSLLLIFTAGVFVMRSAGCVI), 90–110 (LTAVRALLFFLLLVLIAFVLV), 113–133 (LNQFTIYLSVGGLLLAAIYPF), 142–162 (QVVLGMAFSWAIPMAYGAVVG), 169–189 (WLLFLANLVWTIAYDTMYAMV), 212–232 (LYIALLQLGTLTLLAIIGWLE), 236–256 (VSYYFSLLLAAGLFIYQQWLI), and 265–285 (FRAFLNNNWVGMLIFAGIMLA).

This sequence belongs to the UbiA prenyltransferase family. Mg(2+) is required as a cofactor.

The protein localises to the cell inner membrane. It carries out the reaction all-trans-octaprenyl diphosphate + 4-hydroxybenzoate = 4-hydroxy-3-(all-trans-octaprenyl)benzoate + diphosphate. Its pathway is cofactor biosynthesis; ubiquinone biosynthesis. Catalyzes the prenylation of para-hydroxybenzoate (PHB) with an all-trans polyprenyl group. Mediates the second step in the final reaction sequence of ubiquinone-8 (UQ-8) biosynthesis, which is the condensation of the polyisoprenoid side chain with PHB, generating the first membrane-bound Q intermediate 3-octaprenyl-4-hydroxybenzoate. This is 4-hydroxybenzoate octaprenyltransferase from Tolumonas auensis (strain DSM 9187 / NBRC 110442 / TA 4).